The chain runs to 642 residues: Threonine--tRNA ligase (642 aa).

The 61-residue stretch at 1-61 (MPIITLPDGS…EEDASLEIIT (61 aa)) folds into the TGS domain. The segment at 244 to 535 (DHRKIGKQLD…LIEEYAGFFP (292 aa)) is catalytic. Zn(2+) is bound by residues C335, H386, and H512.

Belongs to the class-II aminoacyl-tRNA synthetase family. In terms of assembly, homodimer. Zn(2+) is required as a cofactor.

The protein localises to the cytoplasm. It carries out the reaction tRNA(Thr) + L-threonine + ATP = L-threonyl-tRNA(Thr) + AMP + diphosphate + H(+). Functionally, catalyzes the attachment of threonine to tRNA(Thr) in a two-step reaction: L-threonine is first activated by ATP to form Thr-AMP and then transferred to the acceptor end of tRNA(Thr). Also edits incorrectly charged L-seryl-tRNA(Thr). This is Threonine--tRNA ligase from Vibrio vulnificus (strain YJ016).